A 337-amino-acid chain; its full sequence is Protein RETICULATA-RELATED 3, chloroplastic (337 aa).

A chloroplast-targeting transit peptide spans 1-59 (MAAMAAKLQLSAKSDQSSVRLPRVINLSRDPTTRVSFPRNGSVCSLHTNFSSPHLAKPC). The segment covering 70–89 (NNGGGSGSGGGGGGFGGSGG) has biased composition (gly residues). The tract at residues 70 to 96 (NNGGGSGSGGGGGGFGGSGGEASEESS) is disordered. Helical transmembrane passes span 151 to 171 (FVFSTLVVGSILNFVLMYMLA) and 216 to 236 (VFASVGLAAGLVGTAISNGLI).

It belongs to the RETICULATA family. As to expression, expressed in root meristem, root vasculature, distal region of young leaf primordia, leaf bundle sheath cells, hydathodes and pollen grains.

It localises to the plastid. It is found in the chloroplast membrane. Its function is as follows. May play a role in leaf development. Required for leaf mesophyll cell division in the early stages of leaf organogenesis. This is Protein RETICULATA-RELATED 3, chloroplastic from Arabidopsis thaliana (Mouse-ear cress).